The sequence spans 156 residues: D-aminoacyl-tRNA deacylase (156 aa).

The Gly-cisPro motif, important for rejection of L-amino acids motif lies at 137 to 138 (GP).

Belongs to the DTD family. Homodimer.

It localises to the cytoplasm. It carries out the reaction glycyl-tRNA(Ala) + H2O = tRNA(Ala) + glycine + H(+). It catalyses the reaction a D-aminoacyl-tRNA + H2O = a tRNA + a D-alpha-amino acid + H(+). Its function is as follows. An aminoacyl-tRNA editing enzyme that deacylates mischarged D-aminoacyl-tRNAs. Also deacylates mischarged glycyl-tRNA(Ala), protecting cells against glycine mischarging by AlaRS. Acts via tRNA-based rather than protein-based catalysis; rejects L-amino acids rather than detecting D-amino acids in the active site. By recycling D-aminoacyl-tRNA to D-amino acids and free tRNA molecules, this enzyme counteracts the toxicity associated with the formation of D-aminoacyl-tRNA entities in vivo and helps enforce protein L-homochirality. This Ruegeria sp. (strain TM1040) (Silicibacter sp.) protein is D-aminoacyl-tRNA deacylase.